We begin with the raw amino-acid sequence, 701 residues long: Ubiquitin thioesterase zranb1-B (701 aa).

RanBP2-type zinc fingers lie at residues 3 to 33 (EDGIKWACEYCTFENWPSAIKCTMCRAPRPS), 79 to 108 (TSSKWSCQICTYLNWPRAIRCTQCLSQRRT), and 143 to 173 (IKGQHWTCSACTYENCAKAKKCVVCDHPTPN). 8 residues coordinate Zn(2+): Cys10, Cys13, Cys24, Cys27, Cys85, Cys88, Cys99, and Cys102. A compositionally biased stretch (polar residues) spans 108–121 (TRSPTESPQSSGSG). A disordered region spans residues 108–129 (TRSPTESPQSSGSGLRSIPGPI). Residues Cys150, Cys153, Cys164, and Cys167 each coordinate Zn(2+). The interval 197–220 (RWRGGCSSSNSQRRSPPTSKRDSD) is disordered. Over residues 202–214 (CSSSNSQRRSPPT) the composition is skewed to polar residues. ANK repeat units lie at residues 253–283 (RKTDWLFLNACVGVVEGDLSAVEAYKTSGGD) and 306–333 (YTLVHLSIRFQRQDMLAILLTEVAQHAA). Residues 425 to 585 (LYALWNRTAG…RGHFSALVAM (161 aa)) enclose the OTU domain. Cys436 acts as the Nucleophile in catalysis. The active-site Proton acceptor is the His578.

The protein belongs to the peptidase C64 family.

The protein localises to the cytoplasm. It localises to the nucleus. The enzyme catalyses Thiol-dependent hydrolysis of ester, thioester, amide, peptide and isopeptide bonds formed by the C-terminal Gly of ubiquitin (a 76-residue protein attached to proteins as an intracellular targeting signal).. Its function is as follows. Ubiquitin thioesterase, which specifically hydrolyzes 'Lys-29'-linked and 'Lys-33'-linked diubiquitin. Also cleaves 'Lys-63'-linked chains, but with 40-fold less efficiency compared to 'Lys-29'-linked ones. Positive regulator of the Wnt signaling pathway that deubiquitinates apc protein, a negative regulator of Wnt-mediated transcription. Acts as a regulator of autophagy by mediating deubiquitination of pik3c3/vps34, thereby promoting autophagosome maturation. Plays a role in the regulation of cell morphology and cytoskeletal organization. Required in the stress fiber dynamics and cell migration. This Xenopus laevis (African clawed frog) protein is Ubiquitin thioesterase zranb1-B (zranb1-b).